Reading from the N-terminus, the 128-residue chain is MGLMWGLFSVIIASAAQLSLGFAASHLPPMTHLWDFIAALLAFGLDARILLLGLLGYLLSVFCWYKTLHKLALSKAYALLSMSYVLVWIASMVLPGWEGTFSLKALLGVACIMSGLMLIFLPTTKQRY.

The Cytoplasmic portion of the chain corresponds to 1-2 (MG). The helical transmembrane segment at 3-23 (LMWGLFSVIIASAAQLSLGFA) threads the bilayer. The Periplasmic segment spans residues 24–35 (ASHLPPMTHLWD). Residues 36–56 (FIAALLAFGLDARILLLGLLG) traverse the membrane as a helical segment. Topologically, residues 57–76 (YLLSVFCWYKTLHKLALSKA) are cytoplasmic. A helical membrane pass occupies residues 77–97 (YALLSMSYVLVWIASMVLPGW). Over 98-100 (EGT) the chain is Periplasmic. The helical transmembrane segment at 101–121 (FSLKALLGVACIMSGLMLIFL) threads the bilayer. At 122-128 (PTTKQRY) the chain is on the cytoplasmic side.

It belongs to the ArnF family. Heterodimer of ArnE and ArnF.

The protein localises to the cell inner membrane. It participates in bacterial outer membrane biogenesis; lipopolysaccharide biosynthesis. Translocates 4-amino-4-deoxy-L-arabinose-phosphoundecaprenol (alpha-L-Ara4N-phosphoundecaprenol) from the cytoplasmic to the periplasmic side of the inner membrane. The sequence is that of Probable 4-amino-4-deoxy-L-arabinose-phosphoundecaprenol flippase subunit ArnF from Escherichia coli O127:H6 (strain E2348/69 / EPEC).